The chain runs to 476 residues: Ribulose bisphosphate carboxylase large chain (476 aa).

Positions 1-2 are excised as a propeptide; that stretch reads MS. Proline 3 is modified (N-acetylproline). Lysine 14 carries the post-translational modification N6,N6,N6-trimethyllysine. Substrate-binding residues include asparagine 123 and threonine 173. Catalysis depends on lysine 175, which acts as the Proton acceptor. Position 177 (lysine 177) interacts with substrate. Mg(2+) contacts are provided by lysine 201, aspartate 203, and glutamate 204. Lysine 201 bears the N6-carboxylysine mark. The active-site Proton acceptor is histidine 294. Substrate is bound by residues arginine 295, histidine 327, and serine 379.

Belongs to the RuBisCO large chain family. Type I subfamily. Heterohexadecamer of 8 large chains and 8 small chains; disulfide-linked. The disulfide link is formed within the large subunit homodimers. It depends on Mg(2+) as a cofactor. In terms of processing, the disulfide bond which can form in the large chain dimeric partners within the hexadecamer appears to be associated with oxidative stress and protein turnover.

The protein localises to the plastid. Its subcellular location is the chloroplast. It catalyses the reaction 2 (2R)-3-phosphoglycerate + 2 H(+) = D-ribulose 1,5-bisphosphate + CO2 + H2O. It carries out the reaction D-ribulose 1,5-bisphosphate + O2 = 2-phosphoglycolate + (2R)-3-phosphoglycerate + 2 H(+). In terms of biological role, ruBisCO catalyzes two reactions: the carboxylation of D-ribulose 1,5-bisphosphate, the primary event in carbon dioxide fixation, as well as the oxidative fragmentation of the pentose substrate in the photorespiration process. Both reactions occur simultaneously and in competition at the same active site. The polypeptide is Ribulose bisphosphate carboxylase large chain (Arenaria drummondii (Drummond sandwort)).